A 209-amino-acid polypeptide reads, in one-letter code: Uracil phosphoribosyltransferase (209 aa).

Residues R79, R104, and 131–139 contribute to the 5-phospho-alpha-D-ribose 1-diphosphate site; that span reads DPMLATGNS. Residues I194 and 199–201 contribute to the uracil site; that span reads GDA. D200 lines the 5-phospho-alpha-D-ribose 1-diphosphate pocket.

It belongs to the UPRTase family. It depends on Mg(2+) as a cofactor.

It catalyses the reaction UMP + diphosphate = 5-phospho-alpha-D-ribose 1-diphosphate + uracil. It functions in the pathway pyrimidine metabolism; UMP biosynthesis via salvage pathway; UMP from uracil: step 1/1. With respect to regulation, allosterically activated by GTP. Functionally, catalyzes the conversion of uracil and 5-phospho-alpha-D-ribose 1-diphosphate (PRPP) to UMP and diphosphate. This Sinorhizobium fredii (strain NBRC 101917 / NGR234) protein is Uracil phosphoribosyltransferase.